Consider the following 141-residue polypeptide: Hemoglobin subunit alpha (141 aa).

The Globin domain occupies 1-141; the sequence is VLSPADKANI…VSTVLTSKYR (141 aa). Serine 3 is subject to Phosphoserine. 2 positions are modified to N6-succinyllysine: lysine 7 and lysine 11. At lysine 16 the chain carries N6-acetyllysine; alternate. Lysine 16 bears the N6-succinyllysine; alternate mark. At tyrosine 24 the chain carries Phosphotyrosine. At serine 35 the chain carries Phosphoserine. Residue lysine 40 is modified to N6-succinyllysine. A Phosphoserine modification is found at serine 49. An O2-binding site is contributed by histidine 58. Position 87 (histidine 87) interacts with heme b. Serine 102 is modified (phosphoserine). Threonine 108 bears the Phosphothreonine mark. Residues serine 124 and serine 131 each carry the phosphoserine modification. A phosphothreonine mark is found at threonine 134 and threonine 137. A Phosphoserine modification is found at serine 138.

Belongs to the globin family. As to quaternary structure, heterotetramer of two alpha chains and two beta chains. As to expression, red blood cells.

Its function is as follows. Involved in oxygen transport from the lung to the various peripheral tissues. Hemopressin acts as an antagonist peptide of the cannabinoid receptor CNR1. Hemopressin-binding efficiently blocks cannabinoid receptor CNR1 and subsequent signaling. In Meles meles (Eurasian badger), this protein is Hemoglobin subunit alpha (HBA).